Consider the following 276-residue polypeptide: ATP synthase subunit a (276 aa).

7 consecutive transmembrane segments (helical) span residues 49-69 (KPML…FAAA), 109-129 (YLFT…IPFI), 137-157 (SGMV…AGIS), 173-193 (GIRG…NILV), 203-223 (FANM…GEYI), 232-252 (APVG…EMLI), and 253-273 (QFLQ…GAVA).

It belongs to the ATPase A chain family. As to quaternary structure, F-type ATPases have 2 components, CF(1) - the catalytic core - and CF(0) - the membrane proton channel. CF(1) has five subunits: alpha(3), beta(3), gamma(1), delta(1), epsilon(1). CF(0) has three main subunits: a(1), b(2) and c(9-12). The alpha and beta chains form an alternating ring which encloses part of the gamma chain. CF(1) is attached to CF(0) by a central stalk formed by the gamma and epsilon chains, while a peripheral stalk is formed by the delta and b chains.

It localises to the cell membrane. Key component of the proton channel; it plays a direct role in the translocation of protons across the membrane. In Nocardioides sp. (strain ATCC BAA-499 / JS614), this protein is ATP synthase subunit a.